The chain runs to 281 residues: Bifunctional protein FolD (281 aa).

NADP(+) contacts are provided by residues Gly-164 to Ser-166 and Ser-189.

This sequence belongs to the tetrahydrofolate dehydrogenase/cyclohydrolase family. In terms of assembly, homodimer.

It carries out the reaction (6R)-5,10-methylene-5,6,7,8-tetrahydrofolate + NADP(+) = (6R)-5,10-methenyltetrahydrofolate + NADPH. The catalysed reaction is (6R)-5,10-methenyltetrahydrofolate + H2O = (6R)-10-formyltetrahydrofolate + H(+). Its pathway is one-carbon metabolism; tetrahydrofolate interconversion. Its function is as follows. Catalyzes the oxidation of 5,10-methylenetetrahydrofolate to 5,10-methenyltetrahydrofolate and then the hydrolysis of 5,10-methenyltetrahydrofolate to 10-formyltetrahydrofolate. In Enterococcus faecalis (strain ATCC 700802 / V583), this protein is Bifunctional protein FolD.